We begin with the raw amino-acid sequence, 392 residues long: Leucine aminopeptidase 1 (392 aa).

The N-terminal stretch at 1–18 (MKFSQASLLAACLPAISA) is a signal peptide. Positions 19 to 82 (RFIETAEADN…LGSTRLNAQT (64 aa)) are excised as a propeptide. N174 is a glycosylation site (N-linked (GlcNAc...) asparagine). H182, D201, E240, and D267 together coordinate Zn(2+). An intrachain disulfide couples C316 to C320. H349 is a Zn(2+) binding site.

The protein belongs to the peptidase M28 family. M28E subfamily. In terms of assembly, monomer. Zn(2+) is required as a cofactor.

It localises to the secreted. Its function is as follows. Extracellular aminopeptidase that allows assimilation of proteinaceous substrates. The chain is Leucine aminopeptidase 1 (LAP1) from Fusarium vanettenii (strain ATCC MYA-4622 / CBS 123669 / FGSC 9596 / NRRL 45880 / 77-13-4) (Fusarium solani subsp. pisi).